A 339-amino-acid polypeptide reads, in one-letter code: Alpha-N-dichloroacetyl-p-aminophenylserinol N-oxygenase (339 aa).

The segment covering methionine 1–valine 19 has biased composition (basic and acidic residues). The tract at residues methionine 1–glycine 22 is disordered. Residues glutamate 109, glutamate 144, histidine 147, glutamate 205, histidine 232, glutamate 236, and histidine 239 each contribute to the Fe cation site.

Belongs to the AurF N-oxygenase family. It depends on Fe(2+) as a cofactor.

It carries out the reaction alpha-N-dichloroacetyl-p-aminophenylserinol + AH2 + 2 O2 = chloramphenicol + A + 2 H2O. It functions in the pathway antibiotic biosynthesis. Functionally, involved in chloramphenicol biosynthesis. Catalyzes the six-electron oxidation of an aryl-amine precursor of chloramphenicol (NH2-CAM) to yield the aryl-nitro group of chloramphenicol (CAM). During catalysis, upon exposure of the diferrous cluster to O(2), ClmI forms an exceptionally long-lived peroxo intermediate (CmlI-peroxo), which reacts with NH2-CAM to form CAM. In Streptomyces venezuelae (strain ATCC 10712 / CBS 650.69 / DSM 40230 / JCM 4526 / NBRC 13096 / PD 04745), this protein is Alpha-N-dichloroacetyl-p-aminophenylserinol N-oxygenase.